The following is a 139-amino-acid chain: S-adenosylmethionine decarboxylase proenzyme (139 aa).

The Schiff-base intermediate with substrate; via pyruvic acid role is filled by serine 63. Pyruvic acid (Ser); by autocatalysis is present on serine 63. The Proton acceptor; for processing activity role is filled by histidine 68. Catalysis depends on cysteine 83, which acts as the Proton donor; for catalytic activity.

This sequence belongs to the prokaryotic AdoMetDC family. Type 1 subfamily. In terms of assembly, heterotetramer of two alpha and two beta chains arranged as a dimer of alpha/beta heterodimers. Requires pyruvate as cofactor. In terms of processing, is synthesized initially as an inactive proenzyme. Formation of the active enzyme involves a self-maturation process in which the active site pyruvoyl group is generated from an internal serine residue via an autocatalytic post-translational modification. Two non-identical subunits are generated from the proenzyme in this reaction, and the pyruvate is formed at the N-terminus of the alpha chain, which is derived from the carboxyl end of the proenzyme. The post-translation cleavage follows an unusual pathway, termed non-hydrolytic serinolysis, in which the side chain hydroxyl group of the serine supplies its oxygen atom to form the C-terminus of the beta chain, while the remainder of the serine residue undergoes an oxidative deamination to produce ammonia and the pyruvoyl group blocking the N-terminus of the alpha chain.

It catalyses the reaction S-adenosyl-L-methionine + H(+) = S-adenosyl 3-(methylsulfanyl)propylamine + CO2. The protein operates within amine and polyamine biosynthesis; S-adenosylmethioninamine biosynthesis; S-adenosylmethioninamine from S-adenosyl-L-methionine: step 1/1. Functionally, catalyzes the decarboxylation of S-adenosylmethionine to S-adenosylmethioninamine (dcAdoMet), the propylamine donor required for the synthesis of the polyamines spermine and spermidine from the diamine putrescine. The chain is S-adenosylmethionine decarboxylase proenzyme from Pyrococcus horikoshii (strain ATCC 700860 / DSM 12428 / JCM 9974 / NBRC 100139 / OT-3).